Here is a 119-residue protein sequence, read N- to C-terminus: MLPARNRMTRSTEFDATVKHGTRMAQPDIVVHLRRDSEPDDESAGPRVGLVVGKAVGTAVQRHRVARRLRHVARALLGELEPSDRLVIRALPGSRTASSARLAQELQRCLRRMPAGTGP.

This sequence belongs to the RnpA family. In terms of assembly, consists of a catalytic RNA component (M1 or rnpB) and a protein subunit.

The catalysed reaction is Endonucleolytic cleavage of RNA, removing 5'-extranucleotides from tRNA precursor.. In terms of biological role, RNaseP catalyzes the removal of the 5'-leader sequence from pre-tRNA to produce the mature 5'-terminus. It can also cleave other RNA substrates such as 4.5S RNA. The protein component plays an auxiliary but essential role in vivo by binding to the 5'-leader sequence and broadening the substrate specificity of the ribozyme. This chain is Ribonuclease P protein component, found in Mycobacterium avium (strain 104).